The following is a 248-amino-acid chain: Deoxyribose-phosphate aldolase (248 aa).

Aspartate 117 functions as the Proton donor/acceptor in the catalytic mechanism. Lysine 179 serves as the catalytic Schiff-base intermediate with acetaldehyde. Lysine 208 (proton donor/acceptor) is an active-site residue.

It belongs to the DeoC/FbaB aldolase family. DeoC type 1 subfamily.

Its subcellular location is the cytoplasm. It carries out the reaction 2-deoxy-D-ribose 5-phosphate = D-glyceraldehyde 3-phosphate + acetaldehyde. Its pathway is carbohydrate degradation; 2-deoxy-D-ribose 1-phosphate degradation; D-glyceraldehyde 3-phosphate and acetaldehyde from 2-deoxy-alpha-D-ribose 1-phosphate: step 2/2. In terms of biological role, catalyzes a reversible aldol reaction between acetaldehyde and D-glyceraldehyde 3-phosphate to generate 2-deoxy-D-ribose 5-phosphate. The sequence is that of Deoxyribose-phosphate aldolase from Thermotoga maritima (strain ATCC 43589 / DSM 3109 / JCM 10099 / NBRC 100826 / MSB8).